The chain runs to 343 residues: Dihydroorotase (343 aa).

The Zn(2+) site is built by histidine 14 and histidine 16. Residues 16–18 and asparagine 42 each bind substrate; that span reads HLR. The Zn(2+) site is built by lysine 100, histidine 137, and histidine 175. At lysine 100 the chain carries N6-carboxylysine. Histidine 137 provides a ligand contact to substrate. Residue leucine 220 coordinates substrate. Aspartate 248 is a Zn(2+) binding site. The active site involves aspartate 248. Substrate is bound by residues histidine 252 and alanine 264.

Belongs to the metallo-dependent hydrolases superfamily. DHOase family. Class II DHOase subfamily. Homodimer. The cofactor is Zn(2+).

It catalyses the reaction (S)-dihydroorotate + H2O = N-carbamoyl-L-aspartate + H(+). The protein operates within pyrimidine metabolism; UMP biosynthesis via de novo pathway; (S)-dihydroorotate from bicarbonate: step 3/3. Catalyzes the reversible cyclization of carbamoyl aspartate to dihydroorotate. The sequence is that of Dihydroorotase from Synechococcus sp. (strain CC9902).